A 466-amino-acid polypeptide reads, in one-letter code: Soluble pyridine nucleotide transhydrogenase (466 aa).

An FAD-binding site is contributed by glutamate 36–cysteine 45.

It belongs to the class-I pyridine nucleotide-disulfide oxidoreductase family. Requires FAD as cofactor.

Its subcellular location is the cytoplasm. The enzyme catalyses NAD(+) + NADPH = NADH + NADP(+). In terms of biological role, conversion of NADPH, generated by peripheral catabolic pathways, to NADH, which can enter the respiratory chain for energy generation. The chain is Soluble pyridine nucleotide transhydrogenase from Salmonella paratyphi A (strain ATCC 9150 / SARB42).